The chain runs to 274 residues: Ribose-5-phosphate isomerase (274 aa).

The protein belongs to the ribose 5-phosphate isomerase family.

It localises to the cytoplasm. It catalyses the reaction aldehydo-D-ribose 5-phosphate = D-ribulose 5-phosphate. It functions in the pathway carbohydrate degradation; pentose phosphate pathway; D-ribose 5-phosphate from D-ribulose 5-phosphate (non-oxidative stage): step 1/1. The sequence is that of Ribose-5-phosphate isomerase (RKI1) from Kluyveromyces lactis (strain ATCC 8585 / CBS 2359 / DSM 70799 / NBRC 1267 / NRRL Y-1140 / WM37) (Yeast).